The primary structure comprises 714 residues: BBSome complex member bbs-2 (714 aa).

Coiled coils occupy residues 332 to 361 and 597 to 627; these read IREF…VEKD and MTEV…DSIA.

As to quaternary structure, part of BBSome complex, that contains at least bbs-1, bbs-2, bbs-4, bbs-5, osm-12, bbs-8/ttc-8 and bbs-9. As to expression, expressed in ciliated cells including amphid and both inner and outer labial neurons of the head and in both phasmid neurons PHA and PHB in the tail at larval stages L1 and L2.

It is found in the cell projection. The protein localises to the cilium. Its subcellular location is the cytoplasm. The protein resides in the cytoskeleton. It localises to the cilium basal body. It is found in the cilium axoneme. Component of the BBSome complex. The BBSome complex is thought to function as a coat complex required for sorting of specific membrane proteins to the primary cilia. The BBSome complex is required for ciliogenesis but is dispensable for centriolar satellite function. Required for proper BBSome complex assembly and its ciliary localization. Required for cilia biogenesis and both the assembly and movement of intraflagellar transport proteins along the ciliary axoneme. The chain is BBSome complex member bbs-2 from Caenorhabditis elegans.